Consider the following 141-residue polypeptide: Lutropin subunit beta (141 aa).

The N-terminal stretch at methionine 1–glycine 22 is a signal peptide. Intrachain disulfides connect cysteine 30–cysteine 78, cysteine 44–cysteine 93, cysteine 47–cysteine 131, cysteine 55–cysteine 109, cysteine 59–cysteine 111, and cysteine 114–cysteine 121. The N-linked (GlcNAc...) asparagine glycan is linked to asparagine 34.

The protein belongs to the glycoprotein hormones subunit beta family. As to quaternary structure, heterodimer of a common alpha chain and a unique beta chain which confers biological specificity to thyrotropin, lutropin, follitropin and gonadotropin.

It is found in the secreted. Functionally, promotes spermatogenesis and ovulation by stimulating the testes and ovaries to synthesize steroids. The protein is Lutropin subunit beta (LHB) of Trichosurus vulpecula (Brush-tailed possum).